Here is a 677-residue protein sequence, read N- to C-terminus: Potassium channel KAT1 (677 aa).

Residues 1-63 (MSISWTRNFF…PFNPRYRAWE (63 aa)) lie on the Cytoplasmic side of the membrane. A helical transmembrane segment spans residues 64 to 84 (MWLVLLVIYSAWICPFQFAFI). At 85-90 (TYKKDA) the chain is on the extracellular side. A helical membrane pass occupies residues 91–111 (IFIIDNIVNGFFAIDIILTFF). Residues 112–134 (VAYLDSHSYLLVDSPKKIAIRYL) are Cytoplasmic-facing. A helical transmembrane segment spans residues 135–155 (STWFAFDVCSTAPFQPLSLLF). Residues 156 to 165 (NYNGSELGFR) lie on the Extracellular side of the membrane. The helical; Voltage-sensor transmembrane segment at 166–186 (ILSMLRLWRLRRVSSLFARLE) threads the bilayer. At 187–200 (KDIRFNYFWIRCTK) the chain is on the cytoplasmic side. A helical membrane pass occupies residues 201 to 221 (LISVTLFAIHCAGCFNYLIAD). The Extracellular portion of the chain corresponds to 222-248 (RYPNPRKTWIGAVYPNFKEASLWNRYV). The pore-forming intramembrane region spans 249-268 (TALYWSITTLTTTGYGDFHA). The Extracellular portion of the chain corresponds to 269–272 (ENPR). The helical transmembrane segment at 273 to 293 (EMLFDIFFMMFNLGLTAYLIG) threads the bilayer. The Cytoplasmic portion of the chain corresponds to 294 to 677 (NMTNLVVHWT…DGDHLYFSSN (384 aa)). Position 377–496 (377–496 (LFQGVSRNFL…RVIMNNLFMK (120 aa))) interacts with a nucleoside 3',5'-cyclic phosphate. Over residues 568–577 (IERAKVERSS) the composition is skewed to basic and acidic residues. The interval 568–601 (IERAKVERSSSETAGRSYANDSSKKDPYCSSSNQ) is disordered. In terms of domain architecture, KHA spans 612-677 (RVTIHMMSES…DGDHLYFSSN (66 aa)).

This sequence belongs to the potassium channel family. Plant (TC 1.A.1.4) subfamily. As to quaternary structure, the potassium channel is probably composed of a homo- or heterotetrameric complex of pore-forming subunits. May interact with AKT2 and KAT2. Interacts with SLAC1 and SLAH3. Expressed in guard cells, and in roots.

Its subcellular location is the membrane. Its function is as follows. Highly selective inward-rectifying potassium channel. This voltage-gated channel could mediate long-term potassium influx into guard cells leading to stomatal opening. Assuming opened or closed conformations in response to the voltage difference across the membrane, the channel is activated by hyperpolarization. The channel activity is enhanced upon external acidification. Also permeable to ammonium ions. Blocked by tetraethylammonium and barium ions. The protein is Potassium channel KAT1 (KAT1) of Arabidopsis thaliana (Mouse-ear cress).